We begin with the raw amino-acid sequence, 97 residues long: Single insulin-like growth factor-binding domain protein-1 (97 aa).

An N-terminal signal peptide occupies residues 1–19; that stretch reads MKTLFVFAVGIMLSMRASA. The IGFBP N-terminal domain occupies 20-96; sequence FTCPECRPEL…PEIVGTCVKI (77 aa). A glycan (O-linked (GalNAc...) threonine) is linked at threonine 21. 6 cysteine pairs are disulfide-bonded: cysteine 22/cysteine 45, cysteine 25/cysteine 47, cysteine 30/cysteine 48, cysteine 36/cysteine 51, cysteine 59/cysteine 75, and cysteine 69/cysteine 93.

Expressed in hemocytes.

It is found in the secreted. In terms of biological role, has a role in the innate immune system. The chain is Single insulin-like growth factor-binding domain protein-1 from Cupiennius salei (American wandering spider).